The following is a 1709-amino-acid chain: Protein SHORTAGE IN CHIASMATA 1 homolog (1709 aa).

Basic and acidic residues-rich tracts occupy residues 532–542 (PKLQDEDKHSD), 552–568 (DPQK…EGGT), and 1601–1613 (ESFR…DTPS). Disordered regions lie at residues 532–586 (PKLQ…SSFP) and 1566–1662 (KRKA…DPTW).

This sequence belongs to the XPF family. Interacts (via C-terminus) with PTD. Interacts with ZIP4. As to expression, highly expressed in anthers and pistil during meiosis. Expressed in pollen mother cells (PMCs) during meiosis. Expressed at low levels in roots, shoots, leaves, flowers, and glumes.

It is found in the chromosome. Its subcellular location is the nucleus. It localises to the cytoplasm. The protein localises to the cell membrane. Its function is as follows. Essential for normal crossover (CO) formation during meiosis. Essential component for the formation of class I meiotic COs. Interacts with PTD, another meiotic component, to regulate CO formation, possibly by stabilizing the recombination intermediates during meiosis. SHOC1 and PTD may form transient heterotrimeric or heterotetrameric complexes with HEI10 and/or ZIP4 to promote class I COs formation. Does not seem to be involved in early meiotic recombination steps involving double-strand break (DSB) formation, processing, and single-strand invasion. Does not seem to be involved in homologous pairing or synaptonemal complex (SC) assembly. This chain is Protein SHORTAGE IN CHIASMATA 1 homolog, found in Oryza sativa subsp. japonica (Rice).